A 368-amino-acid polypeptide reads, in one-letter code: Histone macroH2A1.1 (368 aa).

Residues 154 to 177 (AVSSSSAAASSSSSASSSSSVAPK) are disordered. A Macro domain is found at 184 to 368 (TILSKKTLHL…VYNAELINTN (185 aa)). A glycoprotein contacts are provided by aspartate 203, leucine 204, glutamine 225, valine 226, serine 275, glycine 313, serine 314, glycine 315, asparagine 316, and asparagine 317.

It belongs to the histone H2A family. As to quaternary structure, the nucleosome is a histone octamer containing two molecules each of H2A, H2B, H3 and H4 assembled in one H3-H4 heterotetramer and two H2A-H2B heterodimers.

The protein resides in the nucleus. Its subcellular location is the chromosome. Its function is as follows. Variant histone H2A which replaces conventional H2A in a subset of nucleosomes where it represses transcription. Nucleosomes wrap and compact DNA into chromatin, limiting DNA accessibility to the cellular machineries which require DNA as a template. Histones thereby play a central role in transcription regulation, DNA repair, DNA replication and chromosomal stability. DNA accessibility is regulated via a complex set of post-translational modifications of histones, also called histone code, and nucleosome remodeling. Functionally, specifically binds poly-ADP-ribose and plays a key role in NAD(+) metabolism. Able to bind to the ends of poly-ADP-ribose chains created by PARP1 and cap them. This prevents PARP1 from further addition of ADP-ribose and thus limits the consumption of nuclear NAD(+), allowing the cell to maintain proper NAD(+) levels in both the nucleus and the mitochondria to promote proper mitochondrial respiration. The sequence is that of Histone macroH2A1.1 from Capsaspora owczarzaki (strain ATCC 30864).